We begin with the raw amino-acid sequence, 103 residues long: Large ribosomal subunit protein eL14 (103 aa).

This sequence belongs to the eukaryotic ribosomal protein eL14 family.

In Pyrobaculum neutrophilum (strain DSM 2338 / JCM 9278 / NBRC 100436 / V24Sta) (Thermoproteus neutrophilus), this protein is Large ribosomal subunit protein eL14.